Consider the following 343-residue polypeptide: Glycerol-3-phosphate dehydrogenase [NAD(P)+] (343 aa).

NADPH contacts are provided by Ser15, Phe16, Arg36, and Lys110. Sn-glycerol 3-phosphate-binding residues include Lys110 and Gly138. Ala142 is a binding site for NADPH. Lys193, Asp246, Ser256, Arg257, and Asn258 together coordinate sn-glycerol 3-phosphate. Lys193 acts as the Proton acceptor in catalysis. Residue Arg257 participates in NADPH binding. Glu283 lines the NADPH pocket.

This sequence belongs to the NAD-dependent glycerol-3-phosphate dehydrogenase family.

The protein resides in the cytoplasm. The catalysed reaction is sn-glycerol 3-phosphate + NAD(+) = dihydroxyacetone phosphate + NADH + H(+). It catalyses the reaction sn-glycerol 3-phosphate + NADP(+) = dihydroxyacetone phosphate + NADPH + H(+). It functions in the pathway membrane lipid metabolism; glycerophospholipid metabolism. In terms of biological role, catalyzes the reduction of the glycolytic intermediate dihydroxyacetone phosphate (DHAP) to sn-glycerol 3-phosphate (G3P), the key precursor for phospholipid synthesis. The sequence is that of Glycerol-3-phosphate dehydrogenase [NAD(P)+] from Alcanivorax borkumensis (strain ATCC 700651 / DSM 11573 / NCIMB 13689 / SK2).